A 235-amino-acid chain; its full sequence is Uridylate kinase (235 aa).

9-12 (KLSG) is a binding site for ATP. The interval 17–22 (GKDGYG) is involved in allosteric activation by GTP. G51 contacts UMP. Residues G52 and R56 each coordinate ATP. Residues D71 and 132–139 (TGNPYFTT) each bind UMP. Positions 159, 165, and 168 each coordinate ATP.

It belongs to the UMP kinase family. In terms of assembly, homohexamer.

It localises to the cytoplasm. The catalysed reaction is UMP + ATP = UDP + ADP. It participates in pyrimidine metabolism; CTP biosynthesis via de novo pathway; UDP from UMP (UMPK route): step 1/1. With respect to regulation, allosterically activated by GTP. Inhibited by UTP. In terms of biological role, catalyzes the reversible phosphorylation of UMP to UDP. The protein is Uridylate kinase of Chlorobium luteolum (strain DSM 273 / BCRC 81028 / 2530) (Pelodictyon luteolum).